Here is a 476-residue protein sequence, read N- to C-terminus: ATP sulfurylase 2 (476 aa).

The N-terminal 56 residues, 1–56 (MSLMIRSSYVSHITLFQPRNSKPSSFTNQISFLSSSNNNPFLNLVYKRNLTMQSVS), are a transit peptide targeting the chloroplast.

This sequence belongs to the sulfate adenylyltransferase family. Homotetramer. In terms of tissue distribution, mostly expressed in leaves or cotyledons.

It is found in the plastid. Its subcellular location is the chloroplast. It localises to the cytoplasm. It catalyses the reaction sulfate + ATP + H(+) = adenosine 5'-phosphosulfate + diphosphate. It participates in sulfur metabolism; hydrogen sulfide biosynthesis; sulfite from sulfate: step 1/3. The sequence is that of ATP sulfurylase 2 (APS2) from Arabidopsis thaliana (Mouse-ear cress).